The primary structure comprises 279 residues: Dehydrogenase/reductase SDR family member 4 (279 aa).

37-61 (LVTASTDGIGLAIARRLAEDGAHVV) is a binding site for NADP(+). N6-acetyllysine; alternate is present on lysine 93. Position 93 is an N6-succinyllysine; alternate (lysine 93). Lysine 106 is modified (N6-acetyllysine). A substrate-binding site is contributed by serine 170. Tyrosine 183 functions as the Proton acceptor in the catalytic mechanism. An NADP(+)-binding site is contributed by lysine 187. Lysine 217 is subject to N6-acetyllysine; alternate. Lysine 217 is modified (N6-succinyllysine; alternate). Serine 221 carries the post-translational modification Phosphoserine. N6-succinyllysine is present on residues lysine 228 and lysine 235. The Peroxisomal targeting signal signature appears at 277–279 (SRL).

It belongs to the short-chain dehydrogenases/reductases (SDR) family. In terms of assembly, homotetramer.

The protein localises to the peroxisome. The enzyme catalyses a secondary alcohol + NADP(+) = a ketone + NADPH + H(+). The catalysed reaction is 3alpha-hydroxy-5beta-pregnan-20-one + NADP(+) = 5beta-pregnan-3,20-dione + NADPH + H(+). It catalyses the reaction 5beta-dihydrotestosterone + NADPH + H(+) = 5beta-androstane-3alpha,17beta-diol + NADP(+). It carries out the reaction all-trans-retinol + NADP(+) = all-trans-retinal + NADPH + H(+). The enzyme catalyses isatin + NADPH + H(+) = 3-hydroxyindolin-2-one + NADP(+). Its function is as follows. NADPH-dependent oxidoreductase which catalyzes the reduction of a variety of compounds bearing carbonyl groups including ketosteroids, alpha-dicarbonyl compounds, aldehydes, aromatic ketones and quinones. Reduces all-trans-retinal and 9-cis retinal. Reduces 3-ketosteroids and benzil into 3alpha-hydroxysteroids and S-benzoin, respectively, in contrast to the stereoselectivity of primates DHRS4s which produce 3beta-hydroxysteroids and R-benzoin. In the reverse reaction, catalyzes the NADP-dependent oxidation of 3alpha-hydroxysteroids and alcohol, but with much lower efficiency. Involved in the metabolism of 3alpha-hydroxysteroids, retinoid, isatin and xenobiotic carbonyl compounds. This chain is Dehydrogenase/reductase SDR family member 4 (Dhrs4), found in Rattus norvegicus (Rat).